Reading from the N-terminus, the 232-residue chain is Imidazoleglycerol-phosphate dehydratase (232 aa).

It belongs to the imidazoleglycerol-phosphate dehydratase family.

The enzyme catalyses D-erythro-1-(imidazol-4-yl)glycerol 3-phosphate = 3-(imidazol-4-yl)-2-oxopropyl phosphate + H2O. It participates in amino-acid biosynthesis; L-histidine biosynthesis; L-histidine from 5-phospho-alpha-D-ribose 1-diphosphate: step 6/9. The sequence is that of Imidazoleglycerol-phosphate dehydratase (HIS3) from Lachancea kluyveri (strain ATCC 58438 / CBS 3082 / BCRC 21498 / NBRC 1685 / JCM 7257 / NCYC 543 / NRRL Y-12651) (Yeast).